The primary structure comprises 648 residues: Forkhead box protein N1 (648 aa).

Residues 1–95 (MVSLLPPQSD…PGPGSFRLSP (95 aa)) form a disordered region. The span at 38–50 (APQNKHANFSCSS) shows a compositional bias: polar residues. Over residues 54 to 67 (DGPPERTPSLPPHS) the composition is skewed to pro residues. The segment at residues 271–367 (KPIYSYSILI…EELQKWKRKD (97 aa)) is a DNA-binding region (fork-head). Disordered regions lie at residues 392 to 432 (LGSP…APGP), 457 to 521 (HLSP…TLLP), and 629 to 648 (SAAAGPAVYLSPGSKPLALA). A compositionally biased stretch (pro residues) spans 398–412 (GCPPPGLAGPGPIRP).

In terms of tissue distribution, bone marrow (at protein level). Expressed in thymus and skin.

It localises to the nucleus. In terms of biological role, transcriptional regulator which regulates the development, differentiation, and function of thymic epithelial cells (TECs) both in the prenatal and postnatal thymus. Acts as a master regulator of the TECs lineage development and is required from the onset of differentiation in progenitor TECs in the developing fetus to the final differentiation steps through which TECs mature to acquire their full functionality. Regulates, either directly or indirectly the expression of a variety of genes that mediate diverse aspects of thymus development and function, including MHC Class II, DLL4, CCL25, CTSL, CD40 and PAX1. Regulates the differentiation of the immature TECs into functional cortical TECs (cTECs) and medullary TECs (mTECs). Essential for maintenance of mTECs population in the postnatal thymus. Involved in the morphogenesis and maintenance of the three-dimensional thymic microstructure which is necessary for a fully functional thymus. Plays an important role in the maintenance of hematopoiesis and particularly T lineage progenitors within the bone marrow niche with age. Essential for the vascularization of the thymus anlage. Promotes the terminal differentiation of epithelial cells in the epidermis and hair follicles, partly by negatively regulating the activity of protein kinase C. The polypeptide is Forkhead box protein N1 (Foxn1) (Mus musculus (Mouse)).